We begin with the raw amino-acid sequence, 299 residues long: Protein LacX, chromosomal (299 aa).

The sequence is that of Protein LacX, chromosomal (lacX) from Lactococcus lactis subsp. lactis (Streptococcus lactis).